Consider the following 364-residue polypeptide: 4-hydroxythreonine-4-phosphate dehydrogenase (364 aa).

Substrate-binding residues include His138 and Thr139. 3 residues coordinate a divalent metal cation: His169, His214, and His269. Substrate contacts are provided by Lys277, Asn286, and Arg295.

The protein belongs to the PdxA family. As to quaternary structure, homodimer. A divalent metal cation serves as cofactor.

The protein resides in the cytoplasm. It carries out the reaction 4-(phosphooxy)-L-threonine + NAD(+) = 3-amino-2-oxopropyl phosphate + CO2 + NADH. Its pathway is cofactor biosynthesis; pyridoxine 5'-phosphate biosynthesis; pyridoxine 5'-phosphate from D-erythrose 4-phosphate: step 4/5. Functionally, catalyzes the NAD(P)-dependent oxidation of 4-(phosphooxy)-L-threonine (HTP) into 2-amino-3-oxo-4-(phosphooxy)butyric acid which spontaneously decarboxylates to form 3-amino-2-oxopropyl phosphate (AHAP). The protein is 4-hydroxythreonine-4-phosphate dehydrogenase of Bacteroides thetaiotaomicron (strain ATCC 29148 / DSM 2079 / JCM 5827 / CCUG 10774 / NCTC 10582 / VPI-5482 / E50).